A 204-amino-acid polypeptide reads, in one-letter code: Holliday junction branch migration complex subunit RuvA (204 aa).

The segment at 1-64 is domain I; the sequence is MIGKLKGTID…EDQLKLFGFM (64 aa). Residues 65 to 143 are domain II; sequence TALEREWFNL…AFAGEAINIA (79 aa). Residues 144 to 151 are flexible linker; the sequence is LKQELGEG. Residues 152-204 form a domain III region; it reads VAAAPVADAVSALTNLGYSRDQAANAVAAAMKTAGDGADSAKLIRLGLKELAR.

This sequence belongs to the RuvA family. In terms of assembly, homotetramer. Forms an RuvA(8)-RuvB(12)-Holliday junction (HJ) complex. HJ DNA is sandwiched between 2 RuvA tetramers; dsDNA enters through RuvA and exits via RuvB. An RuvB hexamer assembles on each DNA strand where it exits the tetramer. Each RuvB hexamer is contacted by two RuvA subunits (via domain III) on 2 adjacent RuvB subunits; this complex drives branch migration. In the full resolvosome a probable DNA-RuvA(4)-RuvB(12)-RuvC(2) complex forms which resolves the HJ.

The protein localises to the cytoplasm. Functionally, the RuvA-RuvB-RuvC complex processes Holliday junction (HJ) DNA during genetic recombination and DNA repair, while the RuvA-RuvB complex plays an important role in the rescue of blocked DNA replication forks via replication fork reversal (RFR). RuvA specifically binds to HJ cruciform DNA, conferring on it an open structure. The RuvB hexamer acts as an ATP-dependent pump, pulling dsDNA into and through the RuvAB complex. HJ branch migration allows RuvC to scan DNA until it finds its consensus sequence, where it cleaves and resolves the cruciform DNA. The sequence is that of Holliday junction branch migration complex subunit RuvA from Rhizobium etli (strain CIAT 652).